Reading from the N-terminus, the 232-residue chain is 5'-methylthioadenosine/S-adenosylhomocysteine nucleosidase (232 aa).

Glu-12 (proton acceptor) is an active-site residue. Residues Gly-78, Met-153, and 174-175 (ME) each bind substrate. Asp-198 acts as the Proton donor in catalysis.

It belongs to the PNP/UDP phosphorylase family. MtnN subfamily.

The enzyme catalyses S-adenosyl-L-homocysteine + H2O = S-(5-deoxy-D-ribos-5-yl)-L-homocysteine + adenine. The catalysed reaction is S-methyl-5'-thioadenosine + H2O = 5-(methylsulfanyl)-D-ribose + adenine. It catalyses the reaction 5'-deoxyadenosine + H2O = 5-deoxy-D-ribose + adenine. It participates in amino-acid biosynthesis; L-methionine biosynthesis via salvage pathway; S-methyl-5-thio-alpha-D-ribose 1-phosphate from S-methyl-5'-thioadenosine (hydrolase route): step 1/2. Its function is as follows. Catalyzes the irreversible cleavage of the glycosidic bond in both 5'-methylthioadenosine (MTA) and S-adenosylhomocysteine (SAH/AdoHcy) to adenine and the corresponding thioribose, 5'-methylthioribose and S-ribosylhomocysteine, respectively. Also cleaves 5'-deoxyadenosine, a toxic by-product of radical S-adenosylmethionine (SAM) enzymes, into 5-deoxyribose and adenine. This is 5'-methylthioadenosine/S-adenosylhomocysteine nucleosidase from Geobacillus sp. (strain WCH70).